The chain runs to 453 residues: MAKKKATFICQECGYQSPKYLGRCPNCSAWSSFVEEVEVKEVKNARVSLAGEKSRPVKLKDVDNISYHRTQTDMSEFNRVLGGGVVPGSLILIGGDPGIGKSTLLLQVSTQLANKGTVLYASGEESAEQIKLRSERLGDIDNEFYLYAETNMQAIRTEIENIKPDFLIIDSIQTIMSPDITGVQGSVSQVREVTAELMQLAKTNNIATFIVGHVTKEGTLAGPRMLEHMVDTVLYFEGERHHTFRILRAVKNRFGSTNEIGIFEMQSGGLVEVLNPSQVFLEERLDGATGSAVVVTMEGSRPILAEVQSLVTPTVFGNARRTTTGLDFNRVSLIMAVLEKRCGLLLQNQDAYLKSAGGVKLDEPAIDLAVAVAIASSYKEKPTSPQEAFLGEIGLTGEIRRVTRIEQRINEAAKLGFTKVYAPKNALQGIDISQGIEVVGVTTVGQVLKAVFS.

The segment at 10–27 adopts a C4-type zinc-finger fold; that stretch reads CQECGYQSPKYLGRCPNC. ATP is bound at residue 95 to 102; it reads GDPGIGKS. A RadA KNRFG motif motif is present at residues 251–255; it reads KNRFG. A lon-protease-like region spans residues 350-453; that stretch reads DAYLKSAGGV…VGQVLKAVFS (104 aa).

The protein belongs to the RecA family. RadA subfamily.

DNA-dependent ATPase involved in processing of recombination intermediates, plays a role in repairing DNA breaks. Stimulates the branch migration of RecA-mediated strand transfer reactions, allowing the 3' invading strand to extend heteroduplex DNA faster. Binds ssDNA in the presence of ADP but not other nucleotides, has ATPase activity that is stimulated by ssDNA and various branched DNA structures, but inhibited by SSB. Does not have RecA's homology-searching function. This chain is DNA repair protein RadA, found in Streptococcus pyogenes serotype M3 (strain ATCC BAA-595 / MGAS315).